Consider the following 272-residue polypeptide: Transcription factor GAL1 (272 aa).

Residues Met-1–Leu-10 are compositionally biased toward polar residues. Disordered regions lie at residues Met-1–Thr-49, Tyr-102–Ile-215, and Lys-246–Tyr-272. Acidic residues-rich tracts occupy residues Glu-113–Gln-122 and Ser-152–Glu-174. The span at Leu-175–Ile-215 shows a compositional bias: basic and acidic residues. A CCHC-type zinc finger spans residues Cys-240–Asp-255.

Its subcellular location is the nucleus. Its function is as follows. Transcription factor; part of the gene cluster that mediates the biosynthesis of liamocins, glycolipids (also called heavy oils) composed of a single mannitol or arabitol headgroup linked to either three, four or even six 3,5-dihydroxydecanoic ester tail-groups. Positively regulates the expression of PKS1 and EST1 that mediate the biosynthesis of liamocins. The polypeptide is Transcription factor GAL1 (Aureobasidium melanogenum (Aureobasidium pullulans var. melanogenum)).